Reading from the N-terminus, the 311-residue chain is Ribose-phosphate pyrophosphokinase (311 aa).

ATP-binding positions include 37-39 (DGE) and 96-97 (RQ). The Mg(2+) site is built by His-130 and Asp-170. Lys-193 is an active-site residue. D-ribose 5-phosphate-binding positions include Arg-195, Asp-219, and 223–227 (DTAGT).

The protein belongs to the ribose-phosphate pyrophosphokinase family. Class I subfamily. As to quaternary structure, homohexamer. It depends on Mg(2+) as a cofactor.

Its subcellular location is the cytoplasm. The enzyme catalyses D-ribose 5-phosphate + ATP = 5-phospho-alpha-D-ribose 1-diphosphate + AMP + H(+). The protein operates within metabolic intermediate biosynthesis; 5-phospho-alpha-D-ribose 1-diphosphate biosynthesis; 5-phospho-alpha-D-ribose 1-diphosphate from D-ribose 5-phosphate (route I): step 1/1. In terms of biological role, involved in the biosynthesis of the central metabolite phospho-alpha-D-ribosyl-1-pyrophosphate (PRPP) via the transfer of pyrophosphoryl group from ATP to 1-hydroxyl of ribose-5-phosphate (Rib-5-P). This Aquifex aeolicus (strain VF5) protein is Ribose-phosphate pyrophosphokinase.